The primary structure comprises 219 residues: Ribose-5-phosphate isomerase A (219 aa).

Substrate contacts are provided by residues 28-31 (TGST), 81-84 (DSAD), and 94-97 (KGGG). E103 acts as the Proton acceptor in catalysis. A substrate-binding site is contributed by K121.

It belongs to the ribose 5-phosphate isomerase family. In terms of assembly, homodimer.

The catalysed reaction is aldehydo-D-ribose 5-phosphate = D-ribulose 5-phosphate. The protein operates within carbohydrate degradation; pentose phosphate pathway; D-ribose 5-phosphate from D-ribulose 5-phosphate (non-oxidative stage): step 1/1. Catalyzes the reversible conversion of ribose-5-phosphate to ribulose 5-phosphate. This Buchnera aphidicola subsp. Schizaphis graminum (strain Sg) protein is Ribose-5-phosphate isomerase A.